We begin with the raw amino-acid sequence, 1233 residues long: MGTKWTEEQKQAITTRGSNLLVAAAAGSGKTAVLVERIINLITDEENPVDIDRLLVVTFTNAAASEMRERIAEALIAILDQNPEDKRLANQLTLLNKATITTIHSFCLEVVRNNFFLLDLDPNFRIGDDTETLLLQLEASEELFEEMYAKEDKDKEGFLTLVESYGGTKDDQDLQDILLRLYGFVRSLPWPEKWLKDVINTFRVEDNFKFETSKWAEVILDSLKVEISGILNTMLVAVDKLKNEAGLEGYFHAFQREAYEIEQLLQYDNWNEFKNHIQAIEFERLPNAGKDANKNVKEEVSNIRKKVKDKIKEIKEKFFSDSVEEIKDEIKALYPIMEALADLILLFDKKYKEKKREKGIIDFNDIEHFALQILTEIDEEGDVNPSEVALHYREKFEEIFVDEYQDSNLIQEEILSIIARENPPNRFMVGDVKQSIYRFRQANPYIFFEKYNSYSLDTGEKNQKILLYKNFRSRIEVIEAINYIFKKIMSKNIGEVNYTEEEKLNYGAEYEIPPEDSVTGGAVELHLIEKQKVEEEVEEKEEEKNEEKDFEEEEEDLIDDIQVEARVVAERIKQLFSQNFMVYDKNIKSYRAVDYRDIVVLLRATDRWAPVFLEELTQAGIPAFADTGTGYFDTTEIKTIISLLQVIDNPMQDIPLLAVLRSPIFSFTEEELIDLRLEDMEKTIYEAIKKASQREDELGEKAKNFLDTLKKWQEKAVYMPVDEFLWYLYKDTGYYSYVAAMPQGVQRQANLRILFERAKQYEETSFKGLFNFINFINRLKVSSGDMGSAKIVGENEKVVRIMSIHKSKGLEFPVVIVAGLGKQFNTKDLYQKILYHHFLGLGPEFVDFRRRISYPSIVKEAIKYKIKLEGLSEEMRVLYVALTRAKEKLILVGSARDIKKNVRKWANAAILQEKVSEYDILNGKSYMDWIGAAVIRHKDLEPLREFAGVSLSEEEDASKWEVKLWNKKDVLLEKEKNDKVDVVERLRSLDLDAHYSEFYKEVERRLNYVYPYEKACYLPAKLSVTEVKRILNAEVVDEDTTSIFEREVLKTPIFLEKKKGLTAAEKGIAMHLVMQKLDLDKDLSLEGIKEQIKDMVDREILTEEQAKEVNIHKIEGFFKTSLGERMLSSKNVKREVPFHIKLSSREIYKDLPEEYENEFIQVQGIIDCFFEEEDGLVLIDYKTDYVQEGKVEEIKERYKVQIELYSKALENITGKKVKEKYIYLFFNGNILEY.

The UvrD-like helicase ATP-binding domain maps to 3–474; sequence TKWTEEQKQA…ILLYKNFRSR (472 aa). 24–31 serves as a coordination point for ATP; it reads AAAGSGKT. The UvrD-like helicase C-terminal domain maps to 518 to 809; it reads VTGGAVELHL…RIMSIHKSKG (292 aa). Residues 533–555 are disordered; sequence VEEEVEEKEEEKNEEKDFEEEEE.

This sequence belongs to the helicase family. AddA subfamily. Heterodimer of AddA and AddB/RexB. Mg(2+) is required as a cofactor.

The catalysed reaction is Couples ATP hydrolysis with the unwinding of duplex DNA by translocating in the 3'-5' direction.. The enzyme catalyses ATP + H2O = ADP + phosphate + H(+). The heterodimer acts as both an ATP-dependent DNA helicase and an ATP-dependent, dual-direction single-stranded exonuclease. Recognizes the chi site generating a DNA molecule suitable for the initiation of homologous recombination. The AddA nuclease domain is required for chi fragment generation; this subunit has the helicase and 3' -&gt; 5' nuclease activities. The sequence is that of ATP-dependent helicase/nuclease subunit A from Thermoanaerobacter sp. (strain X514).